The primary structure comprises 229 residues: MDAKIKPLRAGKSADARTDFQPAELDPSEFLAAAVQPDQPRPSRAEAEAAVKTLLSYIGENTEREGLLDTPRRVVEAYDELFQGYHQCPAEVLDRTFGETAGYDDFVLVRDISFTSHCEHHVMPFYGKAHIAYTPVERVVGLSKLARLVEIFARRLQTQEHLTAQIAAAIDEVLKPRGVAVMIEAEHTCMSVRGIGKQGASTFTSRYTGMFRDNPAEQARFMSMIRNRG.

The disordered stretch occupies residues 1–21 (MDAKIKPLRAGKSADARTDFQ). Positions 118, 121, and 189 each coordinate Zn(2+).

It belongs to the GTP cyclohydrolase I family. Toroid-shaped homodecamer, composed of two pentamers of five dimers.

The catalysed reaction is GTP + H2O = 7,8-dihydroneopterin 3'-triphosphate + formate + H(+). It participates in cofactor biosynthesis; 7,8-dihydroneopterin triphosphate biosynthesis; 7,8-dihydroneopterin triphosphate from GTP: step 1/1. The chain is GTP cyclohydrolase 1 from Rhodopseudomonas palustris (strain HaA2).